The sequence spans 802 residues: Protein enabled homolog (802 aa).

Positions 1-111 (MSEQSICQAR…SAMMHALEVL (111 aa)) constitute a WH1 domain. Positions 143-155 (NSQLPAQVQNGPS) are enriched in polar residues. Residues 143–166 (NSQLPAQVQNGPSQEELEIQRRQL) form a disordered region. Phosphoserine is present on serine 144. A coiled-coil region spans residues 154–258 (PSQEELEIQR…ERERRMSNAA (105 aa)). Repeat copies occupy residues 175–179 (LERER), 180–184 (MERER), 185–189 (LERER), 190–194 (LERER), 195–199 (LERER), 200–204 (LEQEQ), and 205–209 (LERQR). A 7 X 5 AA tandem repeats of [LM]-E-[QR]-[EQ]-[QR] region spans residues 175-209 (LERERMERERLERERLERERLERERLEQEQLERQR). Positions 245 to 254 (QVEWERERRM) are enriched in basic and acidic residues. Disordered regions lie at residues 245 to 287 (QVEW…PSYA) and 341 to 622 (ATVP…RPLT). Serine 255 carries the phosphoserine; by PKA modification. Residues 255 to 278 (SNAAPSSDSSLSSAPLPEYSSCQP) are compositionally biased toward low complexity. Residues 348–361 (NKNSRPSSPVNTPS) are compositionally biased toward polar residues. A Phosphoserine modification is found at serine 383. A compositionally biased stretch (low complexity) spans 386 to 410 (IMISSPPGKATGPRPVLPVCVSSPV). Pro residues predominate over residues 431 to 464 (VSPPPTSGPAAPPPPPPPPPPPPPPPLPPPPLPP). Residues 485–505 (STPSSKPSVLPSPSAGAPASA) show a composition bias toward low complexity. The segment covering 525-535 (AASQPAESPTP) has biased composition (polar residues). The segment covering 542 to 553 (PPAPPPPPPLPS) has biased composition (pro residues). Residue tyrosine 557 is modified to Phosphotyrosine. Pro residues predominate over residues 561–605 (LPPPPGPPPPPPLPSTGPPPPPPPPPPLPNQAPPPPPPPPAPPLP). The tract at residues 623 to 643 (GLAAAIAGAKLRKVSRVEDGS) is EVH2 block A. The EVH2 stretch occupies residues 623 to 799 (GLAAAIAGAK…DAIRQELSKS (177 aa)). The short motif at 632-635 (KLRK) is the KLKR element. 2 disordered regions span residues 639 to 675 (VEDG…GGSG) and 691 to 764 (AEKG…TEGL). Over residues 664–675 (RGNGPLPLGGSG) the composition is skewed to gly residues. The EVH2 block B stretch occupies residues 674–691 (SGLMEEMSALLARRRRIA). Residues 731–760 (RTNTMNGSKSPVISRPKSTPSSQPSANGVQ) show a composition bias toward polar residues. Serine 738 and serine 740 each carry phosphoserine. The tract at residues 765 to 799 (DYDRLKQDILDEMRKELAKLKEELIDAIRQELSKS) is EVH2 block C. A coiled-coil region spans residues 767-797 (DRLKQDILDEMRKELAKLKEELIDAIRQELS).

Belongs to the Ena/VASP family. As to quaternary structure, homotetramer. Interacts with APBB1IP, APBB1, PFN1 and ROBO4. Isoforms, containing the polyproline-rich regions with PPLP motifs, bind the WW domain of APBB1IP. Isoforms, containing the PPSY motif, bind, in vitro, to the WW2 and WW3 domains of NEDD4 and to the WW1 domain of YAP1. Binds the SH3 domain of BAIAP2-alpha but only after the autoinhibitory region of BAIAP2-alpha has been blocked by interaction with CDC42. Interacts, via the EVH1/WH1 domain, with the Pro-rich domains from VCL, ZYX and Listeria monocytogenes actA and with TES (via LIM domain). The TES LIM domain and the Pro-rich domains from VCL or ZYX compete for the same binding site. Interaction with ZYX is important for targeting ENAH to focal adhesions and enhances production of actin-rich structures at the apical surface of cells. Binds GPHN. Heterotrimer with TES and ACTL7A. Interacts with FAT1 (via EVH1 domains). Interacts, through the Pro-rich region, with the C-terminal SH3 domain of DNMPB. Interacts with PRPF40A. NTN1-induced PKA phosphorylation on Ser-255 directly parallels the formation of filopodial protrusions. As to expression, expressed in heart and testis, lower levels in lung, skeletal muscle, kidney, pancreas and brain. Isoform 5 is expressed exclusively in the brain. Isoform 2 is expressed predominantly in brain, testis, ovary and fat. In the brain, isoforms 2 and 5 are expressed at highest levels in the hippocampus, cortex and midbrain, and at lowest levels in the striatum and cerebellum. Isoform 6 is expressed in brain and spleen.

It is found in the cytoplasm. It localises to the cytoskeleton. The protein resides in the cell projection. Its subcellular location is the lamellipodium. The protein localises to the filopodium. It is found in the synapse. It localises to the cell junction. The protein resides in the focal adhesion. Its function is as follows. Ena/VASP proteins are actin-associated proteins involved in a range of processes dependent on cytoskeleton remodeling and cell polarity such as axon guidance and lamellipodial and filopodial dynamics in migrating cells. ENAH induces the formation of F-actin rich outgrowths in fibroblasts. Acts synergistically with BAIAP2-alpha and downstream of NTN1 to promote filipodia formation. This is Protein enabled homolog (Enah) from Mus musculus (Mouse).